The sequence spans 79 residues: MKLTCMKIVAVLFLTAWTFVTADDSRNGLEYLFPKAHYEMNPEASKLNKKQDCAAGGQFCGFPKIGGPCCSGWCLGVCA.

The signal sequence occupies residues 1 to 22; the sequence is MKLTCMKIVAVLFLTAWTFVTA. The propeptide occupies 23-48; that stretch reads DDSRNGLEYLFPKAHYEMNPEASKLN. Gln51 is subject to Pyrrolidone carboxylic acid. 3 disulfide bridges follow: Cys53–Cys70, Cys60–Cys74, and Cys69–Cys78.

Belongs to the conotoxin O1 superfamily. Expressed by the venom duct.

The protein localises to the secreted. The protein is Conotoxin VnMKLT1-01122 of Conus ventricosus (Mediterranean cone).